The chain runs to 175 residues: Bifunctional protein PyrR (175 aa).

The short motif at 98–110 (VIIIDDVLYTGRT) is the PRPP-binding element.

The protein belongs to the purine/pyrimidine phosphoribosyltransferase family. PyrR subfamily. Homodimer and homohexamer; in equilibrium.

It carries out the reaction UMP + diphosphate = 5-phospho-alpha-D-ribose 1-diphosphate + uracil. In terms of biological role, regulates transcriptional attenuation of the pyrimidine nucleotide (pyr) operon by binding in a uridine-dependent manner to specific sites on pyr mRNA. This disrupts an antiterminator hairpin in the RNA and favors formation of a downstream transcription terminator, leading to a reduced expression of downstream genes. Functionally, also displays a weak uracil phosphoribosyltransferase activity which is not physiologically significant. The chain is Bifunctional protein PyrR from Staphylococcus carnosus (strain TM300).